The primary structure comprises 415 residues: Homoserine O-acetyltransferase (415 aa).

The AB hydrolase-1 domain maps to Asn-47–Pro-369. The active-site Nucleophile is Ser-155. A substrate-binding site is contributed by Arg-226. Active-site residues include Asp-329 and His-362. Asp-363 contacts substrate. The interval Arg-387 to Arg-415 is disordered.

It belongs to the AB hydrolase superfamily. MetX family. Homodimer.

The protein resides in the cytoplasm. It carries out the reaction L-homoserine + acetyl-CoA = O-acetyl-L-homoserine + CoA. The protein operates within amino-acid biosynthesis; L-methionine biosynthesis via de novo pathway; O-acetyl-L-homoserine from L-homoserine: step 1/1. Functionally, transfers an acetyl group from acetyl-CoA to L-homoserine, forming acetyl-L-homoserine. This is Homoserine O-acetyltransferase from Haloferax gibbonsii (strain ATCC 33959 / DSM 4427 / JCM 8863 / NBRC 102184 / NCIMB 2188 / Ma 2.38).